We begin with the raw amino-acid sequence, 176 residues long: Xanthine-guanine phosphoribosyltransferase (176 aa).

5-phospho-alpha-D-ribose 1-diphosphate contacts are provided by residues 51–52 and 110–118; these read RG and DDLVDTGKT. Position 111 (Asp-111) interacts with Mg(2+). Residues Asp-114 and Ile-157 each contribute to the guanine site. Asp-114 and Ile-157 together coordinate xanthine. GMP contacts are provided by residues 114 to 118 and 156 to 157; these read DTGKT and WI.

It belongs to the purine/pyrimidine phosphoribosyltransferase family. XGPT subfamily. In terms of assembly, homotetramer. It depends on Mg(2+) as a cofactor.

It is found in the cell inner membrane. The enzyme catalyses GMP + diphosphate = guanine + 5-phospho-alpha-D-ribose 1-diphosphate. The catalysed reaction is XMP + diphosphate = xanthine + 5-phospho-alpha-D-ribose 1-diphosphate. It catalyses the reaction IMP + diphosphate = hypoxanthine + 5-phospho-alpha-D-ribose 1-diphosphate. It functions in the pathway purine metabolism; GMP biosynthesis via salvage pathway; GMP from guanine: step 1/1. The protein operates within purine metabolism; XMP biosynthesis via salvage pathway; XMP from xanthine: step 1/1. Its function is as follows. Purine salvage pathway enzyme that catalyzes the transfer of the ribosyl-5-phosphate group from 5-phospho-alpha-D-ribose 1-diphosphate (PRPP) to the N9 position of the 6-oxopurines guanine and xanthine to form the corresponding ribonucleotides GMP (guanosine 5'-monophosphate) and XMP (xanthosine 5'-monophosphate), with the release of PPi. To a lesser extent, also acts on hypoxanthine. This is Xanthine-guanine phosphoribosyltransferase from Bradyrhizobium diazoefficiens (strain JCM 10833 / BCRC 13528 / IAM 13628 / NBRC 14792 / USDA 110).